The chain runs to 270 residues: NAD kinase (270 aa).

The Proton acceptor role is filled by D49. NAD(+)-binding positions include 49 to 50 (DG), R54, 126 to 127 (NE), R152, D154, 165 to 170 (TAYNKS), A189, and Q227.

It belongs to the NAD kinase family. Requires a divalent metal cation as cofactor.

The protein localises to the cytoplasm. The catalysed reaction is NAD(+) + ATP = ADP + NADP(+) + H(+). Involved in the regulation of the intracellular balance of NAD and NADP, and is a key enzyme in the biosynthesis of NADP. Catalyzes specifically the phosphorylation on 2'-hydroxyl of the adenosine moiety of NAD to yield NADP. This is NAD kinase from Lactococcus lactis subsp. cremoris (strain MG1363).